A 384-amino-acid chain; its full sequence is MDALMVFDDMLDIPMSMQNNMIADDLLEQAAATASIAPIDIPMTPLQPEMEEEPEVEPEPVSQPEVVQVIEEPPTSTLVANERSEDFFEAAALLETVMEYVNSNDFTLKQLLAFNAAKKPKKSRKRKADSDAAPKQKKEKVEERYCVDSYEITEEIKGEIASAYEGLGALTPLRCAELIKESHELNGKIGGLDTIKDYVTLFSGRVCLYNTPANDVLTSYRKTYTNRYLERNKPTYNKDKTILCVRCATCGRKFKGEDDGEGCVKPNLTHATTTECGKRTICVMCSGIYAQLKTIPDLRAANRCLCCGVDKNKKASNAALFKVKKEKKEKKEKKEKKPKKAVEEEPKQYLTPEFVNDDEDSCDNDLSCLKNNTDLLATAMAELM.

Basic residues predominate over residues 327-339; sequence KKEKKEKKEKKPK. The interval 327 to 358 is disordered; sequence KKEKKEKKEKKPKKAVEEEPKQYLTPEFVNDD.

This is an uncharacterized protein from Magallana gigas (Pacific oyster).